Consider the following 138-residue polypeptide: Putative pre-16S rRNA nuclease (138 aa).

The protein belongs to the YqgF nuclease family.

The protein resides in the cytoplasm. Its function is as follows. Could be a nuclease involved in processing of the 5'-end of pre-16S rRNA. In Enterobacter sp. (strain 638), this protein is Putative pre-16S rRNA nuclease.